The sequence spans 92 residues: Putative regulatory protein CTN_0877 (92 aa).

Belongs to the RemA family.

This chain is Putative regulatory protein CTN_0877, found in Thermotoga neapolitana (strain ATCC 49049 / DSM 4359 / NBRC 107923 / NS-E).